We begin with the raw amino-acid sequence, 180 residues long: tRNA (cytidine(56)-2'-O)-methyltransferase (180 aa).

S-adenosyl-L-methionine-binding positions include Leu83, 115 to 119 (GAEKV), and 133 to 140 (VGNQPHSE).

Belongs to the aTrm56 family. Homodimer.

The protein resides in the cytoplasm. It catalyses the reaction cytidine(56) in tRNA + S-adenosyl-L-methionine = 2'-O-methylcytidine(56) in tRNA + S-adenosyl-L-homocysteine + H(+). Functionally, specifically catalyzes the AdoMet-dependent 2'-O-ribose methylation of cytidine at position 56 in tRNAs. The sequence is that of tRNA (cytidine(56)-2'-O)-methyltransferase from Methanococcus aeolicus (strain ATCC BAA-1280 / DSM 17508 / OCM 812 / Nankai-3).